Consider the following 334-residue polypeptide: Pantothenate synthetase (334 aa).

Met34 to His41 contributes to the ATP binding site. The active-site Proton donor is His41. Gln71 serves as a coordination point for (R)-pantoate. Gln71 provides a ligand contact to beta-alanine. Gly158–Asp161 serves as a coordination point for ATP. Gln164 is a (R)-pantoate binding site. Residues Val187 and Leu195–Arg198 each bind ATP. Positions Pro288 to Glu334 are disordered. The span at Ala313–Glu334 shows a compositional bias: polar residues.

The protein belongs to the pantothenate synthetase family. In terms of assembly, homodimer.

The protein resides in the cytoplasm. The enzyme catalyses (R)-pantoate + beta-alanine + ATP = (R)-pantothenate + AMP + diphosphate + H(+). It participates in cofactor biosynthesis; (R)-pantothenate biosynthesis; (R)-pantothenate from (R)-pantoate and beta-alanine: step 1/1. Its function is as follows. Catalyzes the condensation of pantoate with beta-alanine in an ATP-dependent reaction via a pantoyl-adenylate intermediate. The sequence is that of Pantothenate synthetase from Nocardioides sp. (strain ATCC BAA-499 / JS614).